We begin with the raw amino-acid sequence, 374 residues long: RNA polymerase sigma factor SigA (374 aa).

Positions 141–211 (LAEANLRLVV…TRAIADQART (71 aa)) are sigma-70 factor domain-2. The Interaction with polymerase core subunit RpoC signature appears at 165–168 (DLIQ). A sigma-70 factor domain-3 region spans residues 220–296 (ETINKLIRVQ…DQDATSPSDH (77 aa)). The interval 309–362 (VLDTLTDREENVLRLRFGLDDGRTRTLEEVGRVFGVTRERIRQIEAKALRKLRH) is sigma-70 factor domain-4. Positions 335 to 354 (LEEVGRVFGVTRERIRQIEA) form a DNA-binding region, H-T-H motif.

It belongs to the sigma-70 factor family. RpoD/SigA subfamily. Interacts transiently with the RNA polymerase catalytic core.

The protein localises to the cytoplasm. In terms of biological role, sigma factors are initiation factors that promote the attachment of RNA polymerase to specific initiation sites and are then released. This sigma factor is the primary sigma factor during exponential growth. This is RNA polymerase sigma factor SigA from Listeria innocua serovar 6a (strain ATCC BAA-680 / CLIP 11262).